The sequence spans 88 residues: U-scoloptoxin(12)-Sa1a (88 aa).

A signal peptide spans 1-20 (MKYMIITVVILFTCALKMFC).

Belongs to the scoloptoxin-12 family. Post-translationally, contains 3 disulfide bonds. As to expression, expressed by the venom gland.

Its subcellular location is the secreted. In Scolopendra alternans (Florida Keys giant centipede), this protein is U-scoloptoxin(12)-Sa1a.